The chain runs to 515 residues: MCGINGIIRFGKEVIKEEINKMNKAIKHRGPDDEGIFIYNFKNYSIGLGHVRLAILDLSEKGHQPMGYNVDEDKIIYRDDELDRADIIIVYNGEIYNYLELKEKFNLETETGTDTEVILKLYNKLGFDCVKEFNGMWAFCIFDKKKGLIFCSRDRLGVKPFYYYWDGNEFIFSSELKGILAVKEINKKENINKDAVELYFALGFIPSPYSIYKNTFKLEARQNLIFDLDKREIRKYYYWELPDYKPIYDKKKLIEEGKKLLYDAVKIRMRSDVPVGAFLSGGLDSSTVVGVMREFTDLSKLHTFSIGFEGKYDETPYIKIVVDYFKTQHHHYYFKERDFEELIDKYSWIYDEPFGDYSGFPTYKVSEMARKFVTVVLSGDGGDEVFGGYMTHLNGYRMDFIRKLPKFLRVVGSKLPVKKDLNGIANLYLLKEAFRLSLINPEEFYAESIKEDAIRPEIYKKWTIEKLRYCLNKGDNKLGEALRIFDLLFNTLCDNFLVKVDRASMLTLWKLEVHF.

Catalysis depends on C2, which acts as the For GATase activity. A Glutamine amidotransferase type-2 domain is found at 2-229; that stretch reads CGINGIIRFG…ARQNLIFDLD (228 aa). Residues 52 to 56, 92 to 94, and D114 contribute to the L-glutamine site; these read RLAIL and NGE. Residues I306 and 378-379 each bind ATP; that span reads SG.

The protein belongs to the asparagine synthetase family.

The catalysed reaction is L-aspartate + L-glutamine + ATP + H2O = L-asparagine + L-glutamate + AMP + diphosphate + H(+). It participates in amino-acid biosynthesis; L-asparagine biosynthesis; L-asparagine from L-aspartate (L-Gln route): step 1/1. The sequence is that of Putative asparagine synthetase [glutamine-hydrolyzing] 2 from Methanocaldococcus jannaschii (strain ATCC 43067 / DSM 2661 / JAL-1 / JCM 10045 / NBRC 100440) (Methanococcus jannaschii).